The sequence spans 248 residues: Probable transcriptional regulatory protein Acid_5948 (248 aa).

The protein belongs to the TACO1 family.

It is found in the cytoplasm. This Solibacter usitatus (strain Ellin6076) protein is Probable transcriptional regulatory protein Acid_5948.